The sequence spans 401 residues: Arylacetamide deacetylase-like 2 (401 aa).

Positions 1 to 18 (MGLKALCLGLLCVLFVSH) are cleaved as a signal peptide. The Involved in the stabilization of the negatively charged intermediate by the formation of the oxyanion hole motif lies at 111 to 113 (HGG). C116 and C338 are oxidised to a cystine. Catalysis depends on residues S189, D341, and H371.

It belongs to the 'GDXG' lipolytic enzyme family.

It is found in the secreted. The sequence is that of Arylacetamide deacetylase-like 2 (AADACL2) from Homo sapiens (Human).